A 312-amino-acid polypeptide reads, in one-letter code: Deoxyribonuclease-1-like 1 (312 aa).

The signal sequence occupies residues 1–35 (MPSGQPVFPRRVPDAYIAMRGLVVASLLILLVGGT). N-linked (GlcNAc...) asparagine glycosylation occurs at Asn102. Glu113 is an active-site residue. Asn133 is a glycosylation site (N-linked (GlcNAc...) asparagine). His164 is an active-site residue. Cys203 and Cys240 are oxidised to a cystine. The N-linked (GlcNAc...) asparagine glycan is linked to Asn239.

It belongs to the DNase I family.

Its subcellular location is the endoplasmic reticulum. The chain is Deoxyribonuclease-1-like 1 (Dnase1l1) from Rattus norvegicus (Rat).